We begin with the raw amino-acid sequence, 145 residues long: Large ribosomal subunit protein uL11m (145 aa).

The protein belongs to the universal ribosomal protein uL11 family.

The protein resides in the mitochondrion. The protein is Large ribosomal subunit protein uL11m (RPL11) of Reclinomonas americana.